The primary structure comprises 140 residues: uncharacterized protein (140 aa).

2 helical membrane passes run 26–43 (YLDL…TGVI) and 64–86 (LLNF…NGVL).

Belongs to the bacteriophage holin family. Cp-1 holin subfamily.

It is found in the cell membrane. This is an uncharacterized protein from Bacillus subtilis (strain 168).